The following is a 797-amino-acid chain: uncharacterized protein (797 aa).

Over residues 394–403 (SDDRDDRDKD) the composition is skewed to basic and acidic residues. The interval 394–724 (SDDRDDRDKD…GTKDKEGNAN (331 aa)) is disordered. Residues 404 to 713 (EYELENEEYN…GEDEGEDEGD (310 aa)) show a composition bias toward acidic residues.

The protein belongs to the herpesviridae BBRF2 family.

This is an uncharacterized protein from Saimiriine herpesvirus 2 (strain 11) (SaHV-2).